A 490-amino-acid chain; its full sequence is METLDAIQLPYLGVVGASLIVILGIILLFPLGSDPFITINQHPRDLFQTKAKQQFEYNAAALLNEGLQTGHSAFRLVTNMVTYLILKDQYAEEIKNDSRFGAHEAVDPVLLVDLPGLESMFQGSLHNQVPPMAVRALNKELVHLTPSLSEEAMNCLQTRWTDSTEWHGVSIPETVLALIAQMTTRALLGPELCRNPEWLDIAKSFTTNRAIAVAAVQSWPSFLQPVIHWFLPPCRALRRQIQCARNIILPALERERRAYCSDQPTKREFSNLVFIDQYAKGARYDATMAQLRIIAVAFQTTSDLVEKVIARLCKHPELIEPLREEVVSVVGNHGLHRHSLRKLTLMESVMKETQRLEPAVIIGMFRLAKEKVTLKDGTVVPKGTNIAFANDLRFDPEMYLEPETFDGYRFQRMREDPAKIDLAPFTKTRMSHLAFGHGKHACPGRFLACDEAKLILCHILLNYDIRAVEGSPPELPGSWGNDVGEKTAGD.

A helical transmembrane segment spans residues 12 to 32 (LGVVGASLIVILGIILLFPLG). Residue cysteine 442 coordinates heme.

This sequence belongs to the cytochrome P450 family. The cofactor is heme.

Its subcellular location is the membrane. The enzyme catalyses fumitremorgin C + 2 reduced [NADPH--hemoprotein reductase] + 2 O2 = 12alpha,13alpha-dihydroxyfumitremorgin C + 2 oxidized [NADPH--hemoprotein reductase] + 2 H2O + 2 H(+). The protein operates within mycotoxin biosynthesis. Functionally, cytochrome P450 monooxygenase; part of the gene cluster that mediates the biosynthesis of fumitremorgins, indole alkaloids that carry not only intriguing chemical structures, but also interesting biological and pharmacological activities. The biosynthesis of fumitremorgin-type alkaloids begins by condensation of the two amino acids L-tryptophan and L-proline to brevianamide F, catalyzed by the non-ribosomal peptide synthetase ftmA. Brevianamide F is then prenylated by the prenyltransferase ftmPT1/ftmB in the presence of dimethylallyl diphosphate, resulting in the formation of tryprostatin B. The three cytochrome P450 monooxygenases, ftmP450-1/ftmC, ftmP450-2/ftmE and ftmP450-3/FtmG, are responsible for the conversion of tryprostatin B to 6-hydroxytryprostatin B, tryprostatin A to fumitremorgin C and fumitremorgin C to 12,13-dihydroxyfumitremorgin C, respectively. The putative methyltransferase ftmMT/ftmD is expected for the conversion of 6-hydroxytryprostatin B to tryprostatin A. FtmPT2/FtmH catalyzes the prenylation of 12,13-dihydroxyfumitre-morgin C in the presence of dimethylallyl diphosphate, resulting in the formation of fumitremorgin B. Fumitremorgin B is further converted to verruculogen by ftmOx1/ftmF via the insertion of an endoperoxide bond between the two prenyl moieties. In some fungal species, verruculogen is further converted to fumitremorgin A, but the enzymes involved in this step have not been identified yet. The polypeptide is Fumitremorgin C monooxygenase (Aspergillus fumigatus (strain ATCC MYA-4609 / CBS 101355 / FGSC A1100 / Af293) (Neosartorya fumigata)).